A 317-amino-acid polypeptide reads, in one-letter code: Peroxidase 22.3 (317 aa).

A signal peptide spans 1–25 (MASATNSSLSLMLLVAAAMASVASA). A Pyrrolidone carboxylic acid modification is found at Gln26. Disulfide bonds link Cys36–Cys111 and Cys69–Cys74. Catalysis depends on His67, which acts as the Proton acceptor. Ca(2+) is bound by residues Asp68, Val71, Gly73, Asp75, and Ser77. Residue Asn112 is glycosylated (N-linked (GlcNAc...) asparagine). Intrachain disulfides connect Cys117/Cys312 and Cys196/Cys221. Residue Pro159 participates in substrate binding. N-linked (GlcNAc...) asparagine glycosylation occurs at Asn171. His189 lines the heme b pocket. Residue Thr190 participates in Ca(2+) binding. Residue Asn205 is glycosylated (N-linked (GlcNAc...) asparagine). Asp236, Thr239, and Asp244 together coordinate Ca(2+).

The protein belongs to the peroxidase family. Classical plant (class III) peroxidase subfamily. Heme b is required as a cofactor. The cofactor is Ca(2+).

The protein resides in the secreted. The enzyme catalyses H2O2 + AH2 = A + 2 H2O. Functionally, removal of H(2)O(2), oxidation of toxic reductants, biosynthesis and degradation of lignin, suberization, auxin catabolism, response to environmental stresses such as wounding, pathogen attack and oxidative stress. These functions might be dependent on each isozyme/isoform in each plant tissue. This chain is Peroxidase 22.3, found in Oryza sativa subsp. japonica (Rice).